The sequence spans 414 residues: Isocitrate dehydrogenase [NADP] cytoplasmic (414 aa).

N-acetylserine is present on serine 2. Tyrosine 42 carries the phosphotyrosine modification. 75 to 77 (TIT) is a binding site for NADP(+). Residue threonine 77 coordinates substrate. N6-acetyllysine is present on lysine 81. Residue arginine 82 coordinates NADP(+). Substrate-binding positions include 94 to 100 (SPNGTIR) and arginine 109. The residue at position 126 (lysine 126) is an N6-succinyllysine. Residues arginine 132 and lysine 212 each coordinate substrate. Lysine 224 and lysine 233 each carry N6-acetyllysine. Aspartate 252 contributes to the Mn(2+) binding site. Lysine 260 contacts NADP(+). The Mn(2+) site is built by aspartate 275 and aspartate 279. 310–315 (GTVTRH) serves as a coordination point for NADP(+). Lysine 321 is modified (N6-acetyllysine). NADP(+) is bound at residue asparagine 328. Serine 389 carries the post-translational modification Phosphoserine. Position 400 is an N6-succinyllysine (lysine 400).

Belongs to the isocitrate and isopropylmalate dehydrogenases family. Homodimer. The cofactor is Mg(2+). Requires Mn(2+) as cofactor. Acetylation at Lys-374 dramatically reduces catalytic activity.

Its subcellular location is the cytoplasm. The protein localises to the cytosol. The enzyme catalyses D-threo-isocitrate + NADP(+) = 2-oxoglutarate + CO2 + NADPH. Its function is as follows. Catalyzes the NADP(+)-dependent oxidative decarboxylation of isocitrate (D-threo-isocitrate) to 2-ketoglutarate (2-oxoglutarate), which is required by other enzymes such as the phytanoyl-CoA dioxygenase. Plays a critical role in the generation of NADPH, an important cofactor in many biosynthesis pathways. May act as a corneal epithelial crystallin and may be involved in maintaining corneal epithelial transparency. The sequence is that of Isocitrate dehydrogenase [NADP] cytoplasmic (IDH1) from Ovis aries (Sheep).